A 169-amino-acid chain; its full sequence is Protein-export protein SecB (169 aa).

Belongs to the SecB family. In terms of assembly, homotetramer, a dimer of dimers. One homotetramer interacts with 1 SecA dimer.

The protein localises to the cytoplasm. One of the proteins required for the normal export of preproteins out of the cell cytoplasm. It is a molecular chaperone that binds to a subset of precursor proteins, maintaining them in a translocation-competent state. It also specifically binds to its receptor SecA. The sequence is that of Protein-export protein SecB from Mannheimia succiniciproducens (strain KCTC 0769BP / MBEL55E).